Consider the following 407-residue polypeptide: Probable NADPH dehydrogenase (407 aa).

FMN-binding residues include Thr49 and Gln124. Residue 201–204 participates in substrate binding; sequence HGAH. Catalysis depends on Tyr206, which acts as the Proton donor. The FMN site is built by Arg254 and Arg357.

The protein belongs to the NADH:flavin oxidoreductase/NADH oxidase family. FMN serves as cofactor.

The catalysed reaction is A + NADPH + H(+) = AH2 + NADP(+). Oxidoreductase that binds mammalian estrogens with high affinity. The sequence is that of Probable NADPH dehydrogenase from Candida albicans (Yeast).